The sequence spans 129 residues: Glycine cleavage system H protein (129 aa).

One can recognise a Lipoyl-binding domain in the interval 23–104 (SVTVGITQHA…CYAAWLFKLK (82 aa)). Lys64 bears the N6-lipoyllysine mark.

It belongs to the GcvH family. As to quaternary structure, the glycine cleavage system is composed of four proteins: P, T, L and H. (R)-lipoate serves as cofactor.

Its function is as follows. The glycine cleavage system catalyzes the degradation of glycine. The H protein shuttles the methylamine group of glycine from the P protein to the T protein. The polypeptide is Glycine cleavage system H protein (Nitrosomonas europaea (strain ATCC 19718 / CIP 103999 / KCTC 2705 / NBRC 14298)).